Reading from the N-terminus, the 482-residue chain is ADP-ribosylation factor GTPase-activating protein effector protein 1 (482 aa).

The segment at 116–156 is disordered; sequence QHKSTHSHHINHQTHPIHSSSSNSNSNNRIPTKTDSSKQHT. Residues 118–127 are compositionally biased toward basic residues; that stretch reads KSTHSHHINH. The segment covering 134 to 143 has biased composition (low complexity); the sequence is SSSSNSNSNN. The region spanning 170–297 is the Arf-GAP domain; it reads DELLSIVRKI…FVIDSNQGRE (128 aa). The C4-type zinc finger occupies 186 to 210; the sequence is CCDCGSTATVEWVSINLLCILCIKC.

It is found in the cytoplasm. GTPase-activating protein (GAP) for the ADP ribosylation factors ARF1 and ARF2. May be involved in the endocytic pathway. The protein is ADP-ribosylation factor GTPase-activating protein effector protein 1 (AGE1) of Saccharomyces cerevisiae (strain ATCC 204508 / S288c) (Baker's yeast).